Reading from the N-terminus, the 273-residue chain is SPRY domain-containing SOCS box protein 1 (273 aa).

Tyr-31 is modified (phosphotyrosine; by MET). One can recognise a B30.2/SPRY domain in the interval 33–231 (KPTRLDLLLD…IRMRYLNGLD (199 aa)). The SOCS box domain occupies 232 to 273 (PEPLPLMDLCRRSVRLALGRERLGEIHTLPLPASLKAYLLYQ).

Belongs to the SPSB family. Component of the probable ECS(SPSB1) E3 ubiquitin-protein ligase complex which contains CUL5, RNF7/RBX2, Elongin BC complex and SPSB1. Interacts with CUL5, RNF7, ELOB and ELOC. Directly interacts with MET tyrosine kinase domain in the presence and in the absence of HGF, however HGF treatment has a positive effect on this interaction. When phosphorylated, interacts with RASA1 without affecting its stability. Interacts (via B30.2/SPRY domain) with PAWR; this interaction is direct and occurs in association with the Elongin BC complex. Interacts with NOS2. Interacts with EPHB2.

Its subcellular location is the cytoplasm. The protein resides in the cytosol. It participates in protein modification; protein ubiquitination. Substrate recognition component of a SCF-like ECS (Elongin BC-CUL2/5-SOCS-box protein) E3 ubiquitin-protein ligase complex which mediates the ubiquitination and subsequent proteasomal degradation of target proteins. Negatively regulates nitric oxide (NO) production and limits cellular toxicity in activated macrophages by mediating the ubiquitination and proteasomal degradation of NOS2. Acts as a bridge which links NOS2 with the ECS E3 ubiquitin ligase complex components ELOC and CUL5. The protein is SPRY domain-containing SOCS box protein 1 (SPSB1) of Homo sapiens (Human).